We begin with the raw amino-acid sequence, 250 residues long: MAVTKLVLVRHGESQWNKENRFTGWYDVDLSEKGVSEAKAAGKLLKEEGYSFDFAYTSVLKRAIHTLWNVLDELDQAWLPVEKSWKLNERHYGALQGLNKAETAEKYGDEQVKQWRRGFAVTPPELTKDDERYPGHDPRYAKLSEKELPLTESLALTIDRVIPYWNETILPRMKSGERVIIAAHGNSLRALVKYLDNMSEEEILELNIPTGVPLMYEFDENFKPLKRYYLGNADEIAAKAAAVANQGKAK.

Substrate-binding positions include 10 to 17 (RHGESQWN), 23 to 24 (TG), arginine 62, 89 to 92 (ERHY), lysine 100, 116 to 117 (RR), and 185 to 186 (GN). Residue histidine 11 is the Tele-phosphohistidine intermediate of the active site. Residue glutamate 89 is the Proton donor/acceptor of the active site.

The protein belongs to the phosphoglycerate mutase family. BPG-dependent PGAM subfamily. As to quaternary structure, homodimer.

The catalysed reaction is (2R)-2-phosphoglycerate = (2R)-3-phosphoglycerate. It functions in the pathway carbohydrate degradation; glycolysis; pyruvate from D-glyceraldehyde 3-phosphate: step 3/5. Catalyzes the interconversion of 2-phosphoglycerate and 3-phosphoglycerate. The sequence is that of 2,3-bisphosphoglycerate-dependent phosphoglycerate mutase from Escherichia coli O139:H28 (strain E24377A / ETEC).